The following is a 311-amino-acid chain: Ribosomal protein L11 methyltransferase (311 aa).

Residues Thr162, Gly183, Asp205, and Asn248 each coordinate S-adenosyl-L-methionine.

Belongs to the methyltransferase superfamily. PrmA family.

Its subcellular location is the cytoplasm. It catalyses the reaction L-lysyl-[protein] + 3 S-adenosyl-L-methionine = N(6),N(6),N(6)-trimethyl-L-lysyl-[protein] + 3 S-adenosyl-L-homocysteine + 3 H(+). Methylates ribosomal protein L11. In Bacillus subtilis (strain 168), this protein is Ribosomal protein L11 methyltransferase.